A 130-amino-acid polypeptide reads, in one-letter code: MSMQDPIADMLTRIRNGQAANKVSVSMPSAKLKVAIAKTLKEEGYITDYAVADETKPVLEITLKYFQGQPVVETIQRVSRPGLRIYKSKDELPKVMGGLGVAIVSTSKGLMTDRTARQNGMGGEVICYVA.

This sequence belongs to the universal ribosomal protein uS8 family. Part of the 30S ribosomal subunit. Contacts proteins S5 and S12.

One of the primary rRNA binding proteins, it binds directly to 16S rRNA central domain where it helps coordinate assembly of the platform of the 30S subunit. In Shewanella sediminis (strain HAW-EB3), this protein is Small ribosomal subunit protein uS8.